A 560-amino-acid polypeptide reads, in one-letter code: Membrane protein insertase YidC (560 aa).

The next 6 helical transmembrane spans lie at 5–25 (IINL…WQYF), 334–354 (AIDF…MNFF), 357–377 (YVGN…LLMF), 431–451 (LPIL…YVTI), 476–496 (LFGL…WPIL), and 522–542 (FMPL…LIYW).

The protein belongs to the OXA1/ALB3/YidC family. Type 1 subfamily. As to quaternary structure, interacts with the Sec translocase complex via SecD. Specifically interacts with transmembrane segments of nascent integral membrane proteins during membrane integration.

The protein resides in the cell inner membrane. Its function is as follows. Required for the insertion and/or proper folding and/or complex formation of integral membrane proteins into the membrane. Involved in integration of membrane proteins that insert both dependently and independently of the Sec translocase complex, as well as at least some lipoproteins. Aids folding of multispanning membrane proteins. The protein is Membrane protein insertase YidC of Rickettsia prowazekii (strain Madrid E).